A 118-amino-acid chain; its full sequence is Small ribosomal subunit protein uS13 (118 aa).

Residues Ser94–Lys118 are disordered.

It belongs to the universal ribosomal protein uS13 family. Part of the 30S ribosomal subunit. Forms a loose heterodimer with protein S19. Forms two bridges to the 50S subunit in the 70S ribosome.

Located at the top of the head of the 30S subunit, it contacts several helices of the 16S rRNA. In the 70S ribosome it contacts the 23S rRNA (bridge B1a) and protein L5 of the 50S subunit (bridge B1b), connecting the 2 subunits; these bridges are implicated in subunit movement. Contacts the tRNAs in the A and P-sites. This chain is Small ribosomal subunit protein uS13, found in Haemophilus influenzae (strain 86-028NP).